A 216-amino-acid polypeptide reads, in one-letter code: Probable nicotinate-nucleotide adenylyltransferase (216 aa).

This sequence belongs to the NadD family.

The catalysed reaction is nicotinate beta-D-ribonucleotide + ATP + H(+) = deamido-NAD(+) + diphosphate. It participates in cofactor biosynthesis; NAD(+) biosynthesis; deamido-NAD(+) from nicotinate D-ribonucleotide: step 1/1. Its function is as follows. Catalyzes the reversible adenylation of nicotinate mononucleotide (NaMN) to nicotinic acid adenine dinucleotide (NaAD). The protein is Probable nicotinate-nucleotide adenylyltransferase of Geobacter metallireducens (strain ATCC 53774 / DSM 7210 / GS-15).